A 516-amino-acid polypeptide reads, in one-letter code: Maturase K (516 aa).

This sequence belongs to the intron maturase 2 family. MatK subfamily.

The protein resides in the plastid. Its subcellular location is the chloroplast. Usually encoded in the trnK tRNA gene intron. Probably assists in splicing its own and other chloroplast group II introns. In Chara globularis (Fragile stonewort), this protein is Maturase K.